We begin with the raw amino-acid sequence, 381 residues long: Erythronate-4-phosphate dehydrogenase (381 aa).

2 residues coordinate substrate: S45 and T67. Residues D148, A207–R209, and D233 each bind NAD(+). Residue R209 is part of the active site. Residue E238 is part of the active site. H255 acts as the Proton donor in catalysis. NAD(+) is bound at residue G258.

It belongs to the D-isomer specific 2-hydroxyacid dehydrogenase family. PdxB subfamily. Homodimer.

Its subcellular location is the cytoplasm. The catalysed reaction is 4-phospho-D-erythronate + NAD(+) = (R)-3-hydroxy-2-oxo-4-phosphooxybutanoate + NADH + H(+). It functions in the pathway cofactor biosynthesis; pyridoxine 5'-phosphate biosynthesis; pyridoxine 5'-phosphate from D-erythrose 4-phosphate: step 2/5. Catalyzes the oxidation of erythronate-4-phosphate to 3-hydroxy-2-oxo-4-phosphonooxybutanoate. The sequence is that of Erythronate-4-phosphate dehydrogenase from Idiomarina loihiensis (strain ATCC BAA-735 / DSM 15497 / L2-TR).